Consider the following 329-residue polypeptide: Apolipoprotein E (329 aa).

The signal sequence occupies residues 1–18 (MKVLWAALVVALLAGCWA). 8 tandem repeats follow at residues 92-113 (TLME…EQLG), 114-135 (PMAS…ARLR), 136-157 (SDME…AMLG), 158-179 (QSTE…KRVL), 180-201 (RDAE…EGAE), 202-223 (RSVS…TRHA), 224-245 (KVDA…QQLR), and 246-267 (GRLE…EQME). The segment at 92-267 (TLMEETMKEI…HLDEVREQME (176 aa)) is 8 X 22 AA approximate tandem repeats. The residue at position 155 (Met155) is a Methionine sulfoxide. Ser159 carries the phosphoserine modification. The tract at residues 170-180 (HMRKLRKRVLR) is LDL and other lipoprotein receptors binding. 174 to 177 (LRKR) is a binding site for heparin. The interval 222–302 (HAKVDALATQ…GWFEPLVEDM (81 aa)) is lipid-binding and lipoprotein association. 241 to 248 (GQQLRGRL) provides a ligand contact to heparin. The segment at 278–329 (NQMRQQAEAFQARLKGWFEPLVEDMQRQWAVLVEKVQAAVGTSPTTPPVETK) is homooligomerization. The interval 290–302 (RLKGWFEPLVEDM) is specificity for association with VLDL.

This sequence belongs to the apolipoprotein A1/A4/E family. In terms of assembly, homotetramer. May interact with ABCA1; functionally associated with ABCA1 in the biogenesis of HDLs. May interact with APP/A4 amyloid-beta peptide; the interaction is extremely stable in vitro but its physiological significance is unclear. May interact with MAPT. May interact with MAP2. In the cerebrospinal fluid, interacts with secreted SORL1. Interacts with PMEL; this allows the loading of PMEL luminal fragment on ILVs to induce fibril nucleation. In terms of processing, APOE exists as multiple glycosylated and sialylated glycoforms within cells and in plasma. The extent of glycosylation and sialylation are tissue and context specific. Post-translationally, glycated in plasma VLDL. Phosphorylated by FAM20C in the extracellular medium.

The protein localises to the secreted. The protein resides in the extracellular space. It is found in the extracellular matrix. It localises to the extracellular vesicle. Its subcellular location is the endosome. The protein localises to the multivesicular body. APOE is an apolipoprotein, a protein associating with lipid particles, that mainly functions in lipoprotein-mediated lipid transport between organs via the plasma and interstitial fluids. APOE is a core component of plasma lipoproteins and is involved in their production, conversion and clearance. Apolipoproteins are amphipathic molecules that interact both with lipids of the lipoprotein particle core and the aqueous environment of the plasma. As such, APOE associates with chylomicrons, chylomicron remnants, very low density lipoproteins (VLDL) and intermediate density lipoproteins (IDL) but shows a preferential binding to high-density lipoproteins (HDL). It also binds a wide range of cellular receptors including the LDL receptor/LDLR, the LDL receptor-related proteins LRP1, LRP2 and LRP8 and the very low-density lipoprotein receptor/VLDLR that mediate the cellular uptake of the APOE-containing lipoprotein particles. Finally, APOE also has a heparin-binding activity and binds heparan-sulfate proteoglycans on the surface of cells, a property that supports the capture and the receptor-mediated uptake of APOE-containing lipoproteins by cells. A main function of APOE is to mediate lipoprotein clearance through the uptake of chylomicrons, VLDLs, and HDLs by hepatocytes. APOE is also involved in the biosynthesis by the liver of VLDLs as well as their uptake by peripheral tissues ensuring the delivery of triglycerides and energy storage in muscle, heart and adipose tissues. By participating in the lipoprotein-mediated distribution of lipids among tissues, APOE plays a critical role in plasma and tissues lipid homeostasis. APOE is also involved in two steps of reverse cholesterol transport, the HDLs-mediated transport of cholesterol from peripheral tissues to the liver, and thereby plays an important role in cholesterol homeostasis. First, it is functionally associated with ABCA1 in the biogenesis of HDLs in tissues. Second, it is enriched in circulating HDLs and mediates their uptake by hepatocytes. APOE also plays an important role in lipid transport in the central nervous system, regulating neuron survival and sprouting. The polypeptide is Apolipoprotein E (APOE) (Eumetopias jubatus (Steller sea lion)).